Consider the following 140-residue polypeptide: Small ribosomal subunit protein uS12 (140 aa).

Aspartate 102 bears the 3-methylthioaspartic acid mark.

This sequence belongs to the universal ribosomal protein uS12 family. Part of the 30S ribosomal subunit. Contacts proteins S8 and S17. May interact with IF1 in the 30S initiation complex.

Functionally, with S4 and S5 plays an important role in translational accuracy. Interacts with and stabilizes bases of the 16S rRNA that are involved in tRNA selection in the A site and with the mRNA backbone. Located at the interface of the 30S and 50S subunits, it traverses the body of the 30S subunit contacting proteins on the other side and probably holding the rRNA structure together. The combined cluster of proteins S8, S12 and S17 appears to hold together the shoulder and platform of the 30S subunit. This chain is Small ribosomal subunit protein uS12, found in Geobacillus sp. (strain WCH70).